The chain runs to 283 residues: Dihydropteroate synthase type-1 (283 aa).

A Pterin-binding domain is found at 6-262 (VTVFGILNLT…APGDLRSAIT (257 aa)). Residue asparagine 13 coordinates Mg(2+). (7,8-dihydropterin-6-yl)methyl diphosphate-binding positions include aspartate 86, asparagine 105, aspartate 177, lysine 216, and 250–252 (RTH).

Belongs to the DHPS family. As to quaternary structure, homodimer or homotrimer. Mg(2+) serves as cofactor.

The enzyme catalyses (7,8-dihydropterin-6-yl)methyl diphosphate + 4-aminobenzoate = 7,8-dihydropteroate + diphosphate. It functions in the pathway cofactor biosynthesis; tetrahydrofolate biosynthesis; 7,8-dihydrofolate from 2-amino-4-hydroxy-6-hydroxymethyl-7,8-dihydropteridine diphosphate and 4-aminobenzoate: step 1/2. Functionally, catalyzes the condensation of para-aminobenzoate (pABA) with 6-hydroxymethyl-7,8-dihydropterin diphosphate (DHPt-PP) to form 7,8-dihydropteroate (H2Pte), the immediate precursor of folate derivatives. Implicated in resistance to sulfonamide. The polypeptide is Dihydropteroate synthase type-1 (sulI) (Mycolicibacterium fortuitum (Mycobacterium fortuitum)).